A 288-amino-acid polypeptide reads, in one-letter code: Energy-coupling factor transporter ATP-binding protein EcfA2 (288 aa).

Positions 3-246 constitute an ABC transporter domain; that stretch reads IKLEQLGYCY…PDALVDLGLS (244 aa). Residue 40-47 participates in ATP binding; the sequence is GHTGSGKS.

This sequence belongs to the ABC transporter superfamily. Energy-coupling factor EcfA family. Forms a stable energy-coupling factor (ECF) transporter complex composed of 2 membrane-embedded substrate-binding proteins (S component), 2 ATP-binding proteins (A component) and 2 transmembrane proteins (T component).

The protein localises to the cell membrane. Its function is as follows. ATP-binding (A) component of a common energy-coupling factor (ECF) ABC-transporter complex. Unlike classic ABC transporters this ECF transporter provides the energy necessary to transport a number of different substrates. The protein is Energy-coupling factor transporter ATP-binding protein EcfA2 of Listeria welshimeri serovar 6b (strain ATCC 35897 / DSM 20650 / CCUG 15529 / CIP 8149 / NCTC 11857 / SLCC 5334 / V8).